Consider the following 360-residue polypeptide: Phenylalanine--tRNA ligase alpha subunit (360 aa).

Glutamate 255 serves as a coordination point for Mg(2+).

It belongs to the class-II aminoacyl-tRNA synthetase family. Phe-tRNA synthetase alpha subunit type 1 subfamily. As to quaternary structure, tetramer of two alpha and two beta subunits. Mg(2+) serves as cofactor.

It localises to the cytoplasm. It catalyses the reaction tRNA(Phe) + L-phenylalanine + ATP = L-phenylalanyl-tRNA(Phe) + AMP + diphosphate + H(+). The sequence is that of Phenylalanine--tRNA ligase alpha subunit from Rhizorhabdus wittichii (strain DSM 6014 / CCUG 31198 / JCM 15750 / NBRC 105917 / EY 4224 / RW1) (Sphingomonas wittichii).